Consider the following 343-residue polypeptide: Heat-inducible transcription repressor HrcA (343 aa).

This sequence belongs to the HrcA family.

Negative regulator of class I heat shock genes (grpE-dnaK-dnaJ and groELS operons). Prevents heat-shock induction of these operons. This Mycolicibacterium paratuberculosis (strain ATCC BAA-968 / K-10) (Mycobacterium paratuberculosis) protein is Heat-inducible transcription repressor HrcA.